The primary structure comprises 667 residues: Transketolase 2 (667 aa).

His25 provides a ligand contact to substrate. Residues His65 and Gly113–Leu115 each bind thiamine diphosphate. Asp154 serves as a coordination point for Mg(2+). Thiamine diphosphate is bound by residues Gly155 and Asn184. Mg(2+) contacts are provided by Asn184 and Ile186. Residue His260 participates in substrate binding. Position 260 (His260) interacts with thiamine diphosphate. Lys342 bears the N6-acetyllysine mark. Positions 357 and 384 each coordinate substrate. Catalysis depends on Glu410, which acts as the Proton donor. Phe436 serves as a coordination point for thiamine diphosphate. His460, Asp468, and Arg519 together coordinate substrate.

The protein belongs to the transketolase family. In terms of assembly, homodimer. Mg(2+) serves as cofactor. Requires Ca(2+) as cofactor. Mn(2+) is required as a cofactor. The cofactor is Co(2+). It depends on thiamine diphosphate as a cofactor.

The enzyme catalyses D-sedoheptulose 7-phosphate + D-glyceraldehyde 3-phosphate = aldehydo-D-ribose 5-phosphate + D-xylulose 5-phosphate. Its function is as follows. Catalyzes the reversible transfer of a two-carbon ketol group from sedoheptulose-7-phosphate to glyceraldehyde-3-phosphate, producing xylulose-5-phosphate and ribose-5-phosphate. Catalyzes the transfer of a two-carbon ketol group from a ketose donor to an aldose acceptor, via a covalent intermediate with the cofactor thiamine pyrophosphate. This is Transketolase 2 from Escherichia coli (strain K12).